We begin with the raw amino-acid sequence, 696 residues long: MADESLHTVPLEHNIDYHIVTLFERLEAMRKDSHGGGHGVNNRLSSTLQAPKRSMQAEIRTLEFWRSIISECLASFMYVFIVCGAAAGVGVGASVSSVLLATALASGLAMATLTQCFLHISGAHINPAVTLALCVVRSISPIRAAMYITAQCGGGIAGAALLYGVTVPGYQGNLQAAISHSAALAAWERFGVEFILTFLVVLCYFVSTDPMKKFMGNSAASIGCAYSACCFVSMPYLNPARSLGPSFVLNKWDSHWVYWFGPLVGGMASGLVYEYIFNSRNRNLRHNKGSIDNDSSSIHSEDELNYDMDMEKPNKYQQSQGTYPRGQSNGNGGGQAAGNGQHQAANMGQMPGVVANAGQGNYCQNLYTAPPLSSKYDQQQEPLYGGTRSLYCRSPTLTRSNLNRSQSVYAKSNTAINRDIVPRPGPLVPAQSLYPMRTQQQQQQQQQQQQQVAPAPQSSHLQNQNVQNQMQQRSESIYGMRGSMRGQQQPIQQQQQQQQQQQLQQQQPNMGVQQQQMQPPPQMMSDPQQQPQGFQPVYGTRTNPTPMDGNHKYDRRDPQQMYGVTGPRNRGQSAQSDDSSYGSYHGSAVTPPARHPSVEPSPPPPPMLMYAPPPQPNAAHPQPIRTQSERKVSAPVVVSQPAACAVTYTTSQGSAVTAQQQQQQQQQQQQQQQQQQQQMMMQQQQQHYGMLPLRPN.

Residues 1–71 (MADESLHTVP…LEFWRSIISE (71 aa)) lie on the Cytoplasmic side of the membrane. The residue at position 46 (S46) is a Phosphoserine. T47 carries the phosphothreonine modification. The helical transmembrane segment at 72–93 (CLASFMYVFIVCGAAAGVGVGA) threads the bilayer. The Extracellular portion of the chain corresponds to 94 to 97 (SVSS). A helical transmembrane segment spans residues 98-118 (VLLATALASGLAMATLTQCFL). Residues 119 to 143 (HISGAHINPAVTLALCVVRSISPIR) are Cytoplasmic-facing. The NPA 1 motif lies at 126-128 (NPA). A helical transmembrane segment spans residues 144–167 (AAMYITAQCGGGIAGAALLYGVTV). Topologically, residues 168 to 189 (PGYQGNLQAAISHSAALAAWER) are extracellular. Residues 190-208 (FGVEFILTFLVVLCYFVST) form a helical membrane-spanning segment. Topologically, residues 209 to 213 (DPMKK) are cytoplasmic. The helical transmembrane segment at 214–234 (FMGNSAASIGCAYSACCFVSM) threads the bilayer. Residues 235 to 256 (PYLNPARSLGPSFVLNKWDSHW) lie on the Extracellular side of the membrane. The NPA 2 motif lies at 238–240 (NPA). A helical transmembrane segment spans residues 257 to 273 (VYWFGPLVGGMASGLVY). The residue at position 273 (Y273) is a Phosphotyrosine; by Src. Residues 274 to 696 (EYIFNSRNRN…HYGMLPLRPN (423 aa)) lie on the Cytoplasmic side of the membrane. S300 carries the post-translational modification Phosphoserine. Residues 314–345 (NKYQQSQGTYPRGQSNGNGGGQAAGNGQHQAA) are disordered. At Y367 the chain carries Phosphotyrosine; by Abl. Y384 carries the post-translational modification Phosphotyrosine; by Src. S394 is modified (phosphoserine). Disordered stretches follow at residues 436–634 (MRTQ…KVSA) and 650–696 (TSQG…LRPN). Composition is skewed to low complexity over residues 439-451 (QQQQ…QQQQ) and 462-472 (QNQNVQNQMQQ). At Y478 the chain carries Phosphotyrosine; by Src. Positions 487–532 (QQQPIQQQQQQQQQQQLQQQQPNMGVQQQQMQPPPQMMSDPQQQPQ) are enriched in low complexity. The segment covering 549–558 (GNHKYDRRDP) has biased composition (basic and acidic residues). S576 carries the post-translational modification Phosphoserine. The segment covering 576–587 (SDDSSYGSYHGS) has biased composition (low complexity). A compositionally biased stretch (pro residues) spans 599–616 (EPSPPPPPMLMYAPPPQP). Y610 bears the Phosphotyrosine; by Abl mark. The segment covering 659-686 (QQQQQQQQQQQQQQQQQQQQMMMQQQQQ) has biased composition (low complexity).

It belongs to the MIP/aquaporin (TC 1.A.8) family. Post-translationally, phosphorylated at its C-terminus. Detected in all tissues with neurogenic abilities, for example the neurogenic ectoderm.

It is found in the membrane. Essential for proper differentiation of ectoderm. Acts synergistically with neurogenic locus proteins Notch and Delta during the separation of neural and epidermal cell lineages in response to the lateral inhibition signal. Voltage-insensitive monovalent cation channel. Ion transport is blocked by the presence of divalent cations. The chain is Neurogenic protein big brain (bib) from Drosophila melanogaster (Fruit fly).